We begin with the raw amino-acid sequence, 317 residues long: Transaldolase (317 aa).

Lys132 (schiff-base intermediate with substrate) is an active-site residue.

Belongs to the transaldolase family. Type 1 subfamily. Homodimer.

The protein resides in the cytoplasm. It carries out the reaction D-sedoheptulose 7-phosphate + D-glyceraldehyde 3-phosphate = D-erythrose 4-phosphate + beta-D-fructose 6-phosphate. It participates in carbohydrate degradation; pentose phosphate pathway; D-glyceraldehyde 3-phosphate and beta-D-fructose 6-phosphate from D-ribose 5-phosphate and D-xylulose 5-phosphate (non-oxidative stage): step 2/3. Functionally, transaldolase is important for the balance of metabolites in the pentose-phosphate pathway. The polypeptide is Transaldolase (Histophilus somni (strain 2336) (Haemophilus somnus)).